Consider the following 683-residue polypeptide: DNA-directed RNA polymerase subunit beta' (683 aa).

4 residues coordinate Zn(2+): Cys-69, Cys-71, Cys-87, and Cys-90. Asp-492, Asp-494, and Asp-496 together coordinate Mg(2+).

Belongs to the RNA polymerase beta' chain family. RpoC1 subfamily. As to quaternary structure, in plastids the minimal PEP RNA polymerase catalytic core is composed of four subunits: alpha, beta, beta', and beta''. When a (nuclear-encoded) sigma factor is associated with the core the holoenzyme is formed, which can initiate transcription. Requires Mg(2+) as cofactor. Zn(2+) is required as a cofactor.

The protein resides in the plastid. It is found in the chloroplast. It catalyses the reaction RNA(n) + a ribonucleoside 5'-triphosphate = RNA(n+1) + diphosphate. Functionally, DNA-dependent RNA polymerase catalyzes the transcription of DNA into RNA using the four ribonucleoside triphosphates as substrates. The protein is DNA-directed RNA polymerase subunit beta' of Coffea arabica (Arabian coffee).